A 292-amino-acid polypeptide reads, in one-letter code: Nitrogenase iron protein (292 aa).

10-17 (GKGGIGKS) is an ATP binding site. [4Fe-4S] cluster is bound at residue Cys-98. Residue Arg-101 is modified to ADP-ribosylarginine; by dinitrogenase reductase ADP-ribosyltransferase. Residue Cys-133 participates in [4Fe-4S] cluster binding.

The protein belongs to the NifH/BchL/ChlL family. As to quaternary structure, homodimer. Requires [4Fe-4S] cluster as cofactor. In terms of processing, the reversible ADP-ribosylation of Arg-101 inactivates the nitrogenase reductase and regulates nitrogenase activity.

The enzyme catalyses N2 + 8 reduced [2Fe-2S]-[ferredoxin] + 16 ATP + 16 H2O = H2 + 8 oxidized [2Fe-2S]-[ferredoxin] + 2 NH4(+) + 16 ADP + 16 phosphate + 6 H(+). Functionally, the key enzymatic reactions in nitrogen fixation are catalyzed by the nitrogenase complex, which has 2 components: the iron protein and the molybdenum-iron protein. The chain is Nitrogenase iron protein from Teredinibacter turnerae (strain ATCC 39867 / T7901).